Reading from the N-terminus, the 402-residue chain is MIIHPKVRGFICTTTHPLGCERNVLEQIAATRARGVRTDGPKKVLVIGASSGYGLASRITAAFGFGADTLGVFFEKPGTASKAGTAGWYNSAAFDKHAKAAGLYSKSINGDAFSDAAREKVIELIKTEMGGQVDLMVYSLASPVRKLPGSGEVKRSALKPIGQTYTATAIDTNKDTIIQASIEPASAQEIEDTVTVMGGQDWELWIDALEGAGVLADGARSVAFSYIGTEITWPIYWHGALGKAKVDLDHTAQRLNARLARRGGGANVAVLKSVVTQASAAIPVMPLYISMVYKIMKEKGLHEGTIEQLDRLFRERLYREDGQPAQVDDENRLRLDDWELRDDVQDACKALWPQVTTENLFELTDYAGYKHEFLKLFGFERTDVDYDADVATDVSFDCIELG.

Residues 48–53, 74–75, 111–112, and 140–141 each bind NAD(+); these read GASSGY, FE, DA, and LA. Y226 is a binding site for substrate. Y236 serves as the catalytic Proton donor. Residues K245 and 274–276 contribute to the NAD(+) site; that span reads VVT.

This sequence belongs to the TER reductase family. As to quaternary structure, monomer.

The enzyme catalyses a 2,3-saturated acyl-[ACP] + NAD(+) = a (2E)-enoyl-[ACP] + NADH + H(+). The protein operates within lipid metabolism; fatty acid biosynthesis. In terms of biological role, involved in the final reduction of the elongation cycle of fatty acid synthesis (FAS II). Catalyzes the reduction of a carbon-carbon double bond in an enoyl moiety that is covalently linked to an acyl carrier protein (ACP). This Xanthomonas axonopodis pv. citri (strain 306) protein is Enoyl-[acyl-carrier-protein] reductase [NADH].